A 382-amino-acid polypeptide reads, in one-letter code: Two-component response regulator ARR14 (382 aa).

In terms of domain architecture, Response regulatory spans R12–V128. Residue D63 is modified to 4-aspartylphosphate. A compositionally biased stretch (basic residues) spans C171–S181. Residues C171–L193 are disordered. The Nuclear localization signal motif lies at K199–R202. A DNA-binding region (myb-like GARP) is located at residues R202–R252.

This sequence belongs to the ARR family. Type-B subfamily. In terms of assembly, binds the target DNA as a monomer. In terms of processing, two-component system major event consists of a His-to-Asp phosphorelay between a sensor histidine kinase (HK) and a response regulator (RR). In plants, the His-to-Asp phosphorelay involves an additional intermediate named Histidine-containing phosphotransfer protein (HPt). This multistep phosphorelay consists of a His-Asp-His-Asp sequential transfer of a phosphate group between first a His and an Asp of the HK protein, followed by the transfer to a conserved His of the HPt protein and finally the transfer to an Asp in the receiver domain of the RR protein. In terms of tissue distribution, predominantly expressed in young leaf tissue.

The protein resides in the nucleus. Its function is as follows. Transcriptional activator that binds specifically to the DNA sequence 5'-[AG]GATT-3'. Functions as a response regulator involved in His-to-Asp phosphorelay signal transduction system. Phosphorylation of the Asp residue in the receiver domain activates the ability of the protein to promote the transcription of target genes. Could directly activate some type-A response regulators in response to cytokinins. This Arabidopsis thaliana (Mouse-ear cress) protein is Two-component response regulator ARR14 (ARR14).